The sequence spans 440 residues: Ribosomal protein uS12 methylthiotransferase RimO (440 aa).

The MTTase N-terminal domain maps to 6–116 (PKVGFVSLGC…VVTAVHEVVP (111 aa)). [4Fe-4S] cluster-binding residues include Cys15, Cys51, Cys80, Cys149, Cys153, and Cys156. The Radical SAM core domain maps to 135 to 373 (LTPRHYAYLK…MAHQQAISAA (239 aa)). Positions 376 to 440 (QLKVGKEIEV…DEYDLWAELV (65 aa)) constitute a TRAM domain.

The protein belongs to the methylthiotransferase family. RimO subfamily. Requires [4Fe-4S] cluster as cofactor.

Its subcellular location is the cytoplasm. The enzyme catalyses L-aspartate(89)-[ribosomal protein uS12]-hydrogen + (sulfur carrier)-SH + AH2 + 2 S-adenosyl-L-methionine = 3-methylsulfanyl-L-aspartate(89)-[ribosomal protein uS12]-hydrogen + (sulfur carrier)-H + 5'-deoxyadenosine + L-methionine + A + S-adenosyl-L-homocysteine + 2 H(+). Catalyzes the methylthiolation of an aspartic acid residue of ribosomal protein uS12. The protein is Ribosomal protein uS12 methylthiotransferase RimO of Pseudomonas aeruginosa (strain ATCC 15692 / DSM 22644 / CIP 104116 / JCM 14847 / LMG 12228 / 1C / PRS 101 / PAO1).